Reading from the N-terminus, the 122-residue chain is UPF0102 protein CLL_A1253 (122 aa).

The protein belongs to the UPF0102 family.

In Clostridium botulinum (strain Eklund 17B / Type B), this protein is UPF0102 protein CLL_A1253.